Reading from the N-terminus, the 510-residue chain is MLPLEKAFASPRSSPAPPDLPTPGSAAGVQQEEPETIPERTPADLEFSRLRFREFVYQEAAGPHQTLARLHELCRQWLMPEARSKEQMLELLVLEQFLGILPDKVRPWVVAQYPESCKKAASLVEGLADVLEEPGMLLGSPAGSSSILSDGVYERHMDPLLLPGELASPSQALGAGEIPAPSETPWLSPDPLFLEQRRVREAKTEEDGPANTEQKLKSFPEDPQHLGEWGHLDPAEENLKSYRKLLLWGYQLSQPDAASRLDTEELRLVERDPQGSSLPEGGRRQESAGCACEEAAPAGVLPELPTEAPPGDALADPPSGTTEEEEEQPGKAPDPQDPQDAESDSATGSQRQSVIQQPAPDRGTAKLGTKRPHPEDGDGQSLEGVSSSGDSAGLEAGQGPGADEPGLSRGKPYACGECGEAFAWLSHLMEHHSSHGGRKRYACQGCWKTFHFSLALAEHQKTHEKEKSYALGGARGPQPSTREAQAGARAGGPPESVEGEAPPAPPEAQR.

The disordered stretch occupies residues 1 to 40 (MLPLEKAFASPRSSPAPPDLPTPGSAAGVQQEEPETIPER). The SCAN box domain maps to 49 to 131 (RLRFREFVYQ…SLVEGLADVL (83 aa)). 4 disordered regions span residues 172-191 (ALGA…SPDP), 201-231 (EAKT…EWGH), 263-413 (TEEL…GKPY), and 461-510 (KTHE…EAQR). Composition is skewed to basic and acidic residues over residues 214-231 (QKLK…EWGH) and 263-273 (TEELRLVERDP). Positions 288–299 (AGCACEEAAPAG) are enriched in low complexity. The span at 344–356 (DSATGSQRQSVIQ) shows a compositional bias: polar residues. 2 C2H2-type zinc fingers span residues 413 to 435 (YACG…HSSH) and 441 to 463 (YACQ…QKTH). The span at 491 to 501 (GGPPESVEGEA) shows a compositional bias: low complexity.

It belongs to the krueppel C2H2-type zinc-finger protein family.

The protein resides in the nucleus. May be involved in transcriptional regulation. This chain is Zinc finger and SCAN domain-containing protein 18 (ZSCAN18), found in Homo sapiens (Human).